Here is a 268-residue protein sequence, read N- to C-terminus: Mediator of RNA polymerase II transcription subunit 8-A (268 aa).

2 coiled-coil regions span residues 1–26 (MQRE…KNSL) and 117–160 (VEEL…EERE). Residues 190 to 268 (GLSNRRPPGQ…KSASMHPYQR (79 aa)) form a disordered region. Residues 223–246 (VPMSLQSNQQQQHMAGVSMSQGNQ) are compositionally biased toward polar residues.

It belongs to the Mediator complex subunit 8 family. In terms of assembly, component of the Mediator complex. May be part of a multisubunit E3 ubiquitin-protein ligase complex.

It localises to the nucleus. It functions in the pathway protein modification; protein ubiquitination. Its function is as follows. Component of the Mediator complex, a coactivator involved in the regulated transcription of nearly all RNA polymerase II-dependent genes. Mediator functions as a bridge to convey information from gene-specific regulatory proteins to the basal RNA polymerase II transcription machinery. Mediator is recruited to promoters by direct interactions with regulatory proteins and serves as a scaffold for the assembly of a functional preinitiation complex with RNA polymerase II and the general transcription factors. May play a role as a target recruitment subunit in E3 ubiquitin-protein ligase complexes and thus in ubiquitination and subsequent proteasomal degradation of target proteins. The chain is Mediator of RNA polymerase II transcription subunit 8-A (med8-a) from Xenopus laevis (African clawed frog).